Consider the following 75-residue polypeptide: MTKNFIVTLKKNTPDVEAKKFLDSVHHAGGSIVHKFDIIKGYTIKVPDVLHLNKLKEKHNDVIENVEEDKEVHTN.

T74 is modified (phosphothreonine).

The protein belongs to the protease inhibitor I9 family. As to quaternary structure, part of the heterodimeric LMA1 complex together with the thioredoxin II/TRX2. LMA1 binds to the ATPase SEC18.

The protein localises to the cytoplasm. It is found in the nucleus. Cytosolic inhibitor of vacuolar proteinase B (yscB), probably regulating protease B activity during limited proteolysis. PBI2 is a component of the LMA1 complex, which is involved in the facilitation of vesicle fusion such as homotypic vacuole and ER-derived COPII vesicle fusion with the Golgi. The chain is Protease B inhibitor 1 (PBI2) from Saccharomyces cerevisiae (Baker's yeast).